The primary structure comprises 223 residues: GTP cyclohydrolase 1 (223 aa).

Residues cysteine 111, histidine 114, and cysteine 182 each coordinate Zn(2+).

This sequence belongs to the GTP cyclohydrolase I family. In terms of assembly, homomer.

It catalyses the reaction GTP + H2O = 7,8-dihydroneopterin 3'-triphosphate + formate + H(+). It functions in the pathway cofactor biosynthesis; 7,8-dihydroneopterin triphosphate biosynthesis; 7,8-dihydroneopterin triphosphate from GTP: step 1/1. The sequence is that of GTP cyclohydrolase 1 from Flavobacterium johnsoniae (strain ATCC 17061 / DSM 2064 / JCM 8514 / BCRC 14874 / CCUG 350202 / NBRC 14942 / NCIMB 11054 / UW101) (Cytophaga johnsonae).